A 372-amino-acid polypeptide reads, in one-letter code: Ciliary neurotrophic factor receptor subunit alpha (372 aa).

Positions 1–22 are cleaved as a signal peptide; the sequence is MAASVPWACCAVLAAAAAAVYT. In terms of domain architecture, Ig-like C2-type spans 27 to 104; that stretch reads PQEAPHVQYE…WHLRHQVLLH (78 aa). An intrachain disulfide couples cysteine 46 to cysteine 89. Asparagine 60, asparagine 70, asparagine 142, asparagine 190, and asparagine 261 each carry an N-linked (GlcNAc...) asparagine glycan. 2 consecutive Fibronectin type-III domains span residues 108–205 and 206–306; these read PPRE…VKPD and PPEN…TEEP. A WSXWS motif motif is present at residues 290 to 294; it reads WSDWS. A disordered region spans residues 301 to 339; it reads PWTEEPRHLTTEAQAPETTTSTTSSLAPPPTTKICDPGE. The segment covering 311 to 326 has biased composition (low complexity); that stretch reads TEAQAPETTTSTTSSL. A lipid anchor (GPI-anchor amidated serine) is attached at serine 342. The propeptide at 343–372 is removed in mature form; sequence GGGPSIPFLTSVPVTLVLAAAAATANNLLI.

This sequence belongs to the type I cytokine receptor family. Type 3 subfamily. Forms a heterotrimer with LIFR and IL6ST. Interacts with heterodimeric neurotropic cytokine composed of CLCF1/CLC and CRLF1/CLF-1. Either alone or in complex with the heterodimer CLCF1-CRLF1 interacts with SORL1; this interaction may promote internalization and lysosomal degradation. In terms of tissue distribution, nervous system.

The protein resides in the cell membrane. Its function is as follows. Binds to CNTF. The alpha subunit provides the receptor specificity. This chain is Ciliary neurotrophic factor receptor subunit alpha (Cntfr), found in Rattus norvegicus (Rat).